Reading from the N-terminus, the 317-residue chain is tRNA dimethylallyltransferase (317 aa).

ATP is bound at residue 19–26 (GPTASGKS). A substrate-binding site is contributed by 21-26 (TASGKS). Positions 49 to 52 (DSAQ) are interaction with substrate tRNA.

Belongs to the IPP transferase family. Monomer. The cofactor is Mg(2+).

It catalyses the reaction adenosine(37) in tRNA + dimethylallyl diphosphate = N(6)-dimethylallyladenosine(37) in tRNA + diphosphate. In terms of biological role, catalyzes the transfer of a dimethylallyl group onto the adenine at position 37 in tRNAs that read codons beginning with uridine, leading to the formation of N6-(dimethylallyl)adenosine (i(6)A). This chain is tRNA dimethylallyltransferase, found in Erythrobacter litoralis (strain HTCC2594).